The following is a 700-amino-acid chain: Myb-related protein B (700 aa).

3 consecutive HTH myb-type domains span residues arginine 26–leucine 77, asparagine 78–valine 133, and lysine 134–valine 184. The H-T-H motif DNA-binding region spans tryptophan 54–leucine 77. A Glycyl lysine isopeptide (Lys-Gly) (interchain with G-Cter in SUMO2) cross-link involves residue lysine 104. DNA-binding regions (H-T-H motif) lie at residues tryptophan 106–leucine 129 and tryptophan 157–isoleucine 180. Residues lysine 194 and lysine 197 each participate in a glycyl lysine isopeptide (Lys-Gly) (interchain with G-Cter in SUMO2) cross-link. 2 disordered regions span residues leucine 212–serine 287 and proline 391–arginine 412. Residues glutamine 213 to proline 229 show a composition bias toward polar residues. Serine 241 is subject to Phosphoserine. The residue at position 266 (threonine 266) is a Phosphothreonine. A Glycyl lysine isopeptide (Lys-Gly) (interchain with G-Cter in SUMO2) cross-link involves residue lysine 275. 2 positions are modified to phosphoserine: serine 282 and serine 393. A Glycyl lysine isopeptide (Lys-Gly) (interchain with G-Cter in SUMO2) cross-link involves residue lysine 411. Residues lysine 411–arginine 417 carry the Nuclear localization signal motif. Phosphothreonine; by CDK2 occurs at positions 440 and 444. Glycyl lysine isopeptide (Lys-Gly) (interchain with G-Cter in SUMO2) cross-links involve residues lysine 447 and lysine 482. Phosphothreonine; by CDK2 is present on residues threonine 487 and threonine 494. Lysine 499 is covalently cross-linked (Glycyl lysine isopeptide (Lys-Gly) (interchain with G-Cter in SUMO2)). Threonine 505 carries the post-translational modification Phosphothreonine. Residue lysine 509 forms a Glycyl lysine isopeptide (Lys-Gly) (interchain with G-Cter in SUMO2) linkage. Threonine 520 carries the phosphothreonine; by CDK2 modification. Glycyl lysine isopeptide (Lys-Gly) (interchain with G-Cter in SUMO2) cross-links involve residues lysine 523, lysine 533, and lysine 546. Residues arginine 564–lysine 584 carry the Bipartite nuclear localization signal motif. Phosphoserine; by CDK2 is present on serine 577. Glycyl lysine isopeptide (Lys-Gly) (interchain with G-Cter in SUMO2) cross-links involve residues lysine 584, lysine 596, lysine 625, lysine 639, and lysine 648.

In terms of assembly, component of the DREAM complex (also named LINC complex) at least composed of E2F4, E2F5, LIN9, LIN37, LIN52, LIN54, MYBL1, MYBL2, RBL1, RBL2, RBBP4, TFDP1 and TFDP2. The complex exists in quiescent cells where it represses cell cycle-dependent genes. It dissociates in S phase when LIN9, LIN37, LIN52 and LIN54 form a subcomplex that binds to MYBL22. Interacts with CCNF (via the Cyclin N-terminal domain). Phosphorylated by cyclin A/CDK2 during S-phase. Phosphorylation at Thr-520 is probably involved in transcriptional activity.

The protein resides in the nucleus. Its function is as follows. Transcription factor involved in the regulation of cell survival, proliferation, and differentiation. Transactivates the expression of the CLU gene. This Homo sapiens (Human) protein is Myb-related protein B (MYBL2).